Here is a 20-residue protein sequence, read N- to C-terminus: Thylakoid lumenal 22 kDa protein (20 aa).

The protein localises to the plastid. The protein resides in the chloroplast thylakoid lumen. The sequence is that of Thylakoid lumenal 22 kDa protein from Spinacia oleracea (Spinach).